The primary structure comprises 818 residues: Elongation factor G, mitochondrial (818 aa).

Residues 1–23 (MFLGRAASRTCRHSQPLRVAARA) constitute a mitochondrion transit peptide. The tract at residues 67–96 (MASTATATKPTEEASSSDQPPAPAHKLTDN) is disordered. Residues 69 to 85 (STATATKPTEEASSSDQ) are compositionally biased toward polar residues. The 289-residue stretch at 102–390 (TFQRNIGISA…GVCEYLPNPS (289 aa)) folds into the tr-type G domain. Residues 111-118 (AHIDSGKT), 188-192 (DTPGH), and 242-245 (NKMD) each bind GTP.

Belongs to the TRAFAC class translation factor GTPase superfamily. Classic translation factor GTPase family. EF-G/EF-2 subfamily.

It is found in the mitochondrion. It participates in protein biosynthesis; polypeptide chain elongation. Functionally, mitochondrial GTPase that catalyzes the GTP-dependent ribosomal translocation step during translation elongation. During this step, the ribosome changes from the pre-translocational (PRE) to the post-translocational (POST) state as the newly formed A-site-bound peptidyl-tRNA and P-site-bound deacylated tRNA move to the P and E sites, respectively. Catalyzes the coordinated movement of the two tRNA molecules, the mRNA and conformational changes in the ribosome. The protein is Elongation factor G, mitochondrial of Coprinopsis cinerea (strain Okayama-7 / 130 / ATCC MYA-4618 / FGSC 9003) (Inky cap fungus).